The primary structure comprises 525 residues: NAD(P)H-quinone oxidoreductase chain 4-1 (525 aa).

14 consecutive transmembrane segments (helical) span residues 4-24 (FPWL…IPII), 37-57 (LAVG…GFDL), 89-109 (LIIL…PVTL), 111-131 (PKLF…VFAV), 134-154 (ILLF…ILSI), 167-187 (FILY…TLAF), 210-230 (LLLY…FPLH), 241-261 (TAPA…YALL), 273-293 (AVFA…AAFT), 309-329 (ISHM…GMSG), 330-350 (AMLQ…MVGA), 385-405 (LALP…GFAT), 416-436 (IVVV…LSML), and 462-482 (VFII…PKLI).

The protein belongs to the complex I subunit 4 family.

Its subcellular location is the cellular thylakoid membrane. The catalysed reaction is a plastoquinone + NADH + (n+1) H(+)(in) = a plastoquinol + NAD(+) + n H(+)(out). It carries out the reaction a plastoquinone + NADPH + (n+1) H(+)(in) = a plastoquinol + NADP(+) + n H(+)(out). In terms of biological role, NDH-1 shuttles electrons from NAD(P)H, via FMN and iron-sulfur (Fe-S) centers, to quinones in the respiratory chain. The immediate electron acceptor for the enzyme in this species is believed to be plastoquinone. Couples the redox reaction to proton translocation (for every two electrons transferred, four hydrogen ions are translocated across the cytoplasmic membrane), and thus conserves the redox energy in a proton gradient. This is NAD(P)H-quinone oxidoreductase chain 4-1 (ndhD1) from Synechocystis sp. (strain ATCC 27184 / PCC 6803 / Kazusa).